Here is a 118-residue protein sequence, read N- to C-terminus: Acidic elicitin A1 (118 aa).

Positions 1 to 20 are cleaved as a signal peptide; it reads MNFRALFAATVAALVGSTSA. Intrachain disulfides connect cysteine 23–cysteine 91, cysteine 47–cysteine 76, and cysteine 71–cysteine 115.

The protein belongs to the elicitin family.

The protein resides in the secreted. Its function is as follows. Induces local and distal defense responses (incompatible hypersensitive reaction) in plants from the solanaceae and cruciferae families. Elicits leaf necrosis and causes the accumulation of pathogenesis-related proteins. Might interact with the lipidic molecules of the plasma membrane. The polypeptide is Acidic elicitin A1 (B14) (Phytophthora cryptogea).